The primary structure comprises 85 residues: Putative plasmid stability protein y4jJ (85 aa).

A compositionally biased stretch (basic and acidic residues) spans 66–78; it reads EAEHFNQLRDKTP. Residues 66–85 are disordered; that stretch reads EAEHFNQLRDKTPAEPMSFE.

The protein to P.syringae pv tomato plasmid stability protein StbC.

Functionally, involved in plasmid stability. This is Putative plasmid stability protein y4jJ from Sinorhizobium fredii (strain NBRC 101917 / NGR234).